The sequence spans 255 residues: 4-diphosphocytidyl-2-C-methyl-D-erythritol kinase (255 aa).

The active site involves Lys6. Residue 95–105 (PVCAGLGGGSS) coordinates ATP. Asp137 is an active-site residue.

Belongs to the GHMP kinase family. IspE subfamily.

The enzyme catalyses 4-CDP-2-C-methyl-D-erythritol + ATP = 4-CDP-2-C-methyl-D-erythritol 2-phosphate + ADP + H(+). Its pathway is isoprenoid biosynthesis; isopentenyl diphosphate biosynthesis via DXP pathway; isopentenyl diphosphate from 1-deoxy-D-xylulose 5-phosphate: step 3/6. Functionally, catalyzes the phosphorylation of the position 2 hydroxy group of 4-diphosphocytidyl-2C-methyl-D-erythritol. The chain is 4-diphosphocytidyl-2-C-methyl-D-erythritol kinase from Campylobacter jejuni subsp. jejuni serotype O:6 (strain 81116 / NCTC 11828).